Reading from the N-terminus, the 191-residue chain is Transcription factor E (191 aa).

The 84-residue stretch at 4–87 (RNKELLEIGR…YWHIETKRLP (84 aa)) folds into the HTH TFE/IIEalpha-type domain. Positions 170–191 (APPKKEKKGKKSKKRSKKSKKK) are disordered. The segment covering 174–191 (KEKKGKKSKKRSKKSKKK) has biased composition (basic residues).

It belongs to the TFE family. In terms of assembly, monomer. Interaction with RNA polymerase subunits RpoF and RpoE is necessary for Tfe stimulatory transcription activity. Able to interact with Tbp and RNA polymerase in the absence of DNA promoter. Interacts both with the preinitiation and elongation complexes.

Functionally, transcription factor that plays a role in the activation of archaeal genes transcribed by RNA polymerase. Facilitates transcription initiation by enhancing TATA-box recognition by TATA-box-binding protein (Tbp), and transcription factor B (Tfb) and RNA polymerase recruitment. Not absolutely required for transcription in vitro, but particularly important in cases where Tbp or Tfb function is not optimal. It dynamically alters the nucleic acid-binding properties of RNA polymerases by stabilizing the initiation complex and destabilizing elongation complexes. Seems to translocate with the RNA polymerase following initiation and acts by binding to the non template strand of the transcription bubble in elongation complexes. This is Transcription factor E from Pyrococcus horikoshii (strain ATCC 700860 / DSM 12428 / JCM 9974 / NBRC 100139 / OT-3).